A 601-amino-acid polypeptide reads, in one-letter code: Multidrug and toxin extrusion protein 2 (601 aa).

Over 1–62 the chain is Cytoplasmic; it reads MNTAFAGFDE…PRGFWDEARA (62 aa). The helical transmembrane segment at 63–83 threads the bilayer; that stretch reads LFVLSGPLFLFQVLNFLTYVV. Over 84–95 the chain is Extracellular; the sequence is GTVFCGHLGKVE. Residues 96–116 traverse the membrane as a helical segment; the sequence is LASVTLGVAFVNVCGVSVGAG. The Cytoplasmic segment spans residues 117-145; that stretch reads LSSACDTLMSQSFGSPNKKHVGVILQRGS. The chain crosses the membrane as a helical span at residues 146-166; that stretch reads LILLLCCLPCWALFLNTQHIL. Topologically, residues 167 to 182 are extracellular; sequence LLFRQDPAVSRLTQDY. A helical membrane pass occupies residues 183-203; that stretch reads AMIFIPGLPAIFLYSLLAKYL. Residues 204–212 lie on the Cytoplasmic side of the membrane; that stretch reads QNQGIVWPQ. A helical transmembrane segment spans residues 213–233; sequence VLSGVVGNCVNGVANYALVSV. At 234-241 the chain is on the extracellular side; sequence LNLGVRGS. The helical transmembrane segment at 242–262 threads the bilayer; the sequence is AYANTISQFVQAAFLFLHIVL. The Cytoplasmic portion of the chain corresponds to 263–281; sequence KKLHLETWEGWSSQCLRDW. A helical membrane pass occupies residues 282–301; the sequence is GPFLSLAIPSMLMMCVEWWA. Residues 302–320 are Extracellular-facing; sequence YEIGSFLMGLLGVVDLSGQ. A helical transmembrane segment spans residues 321–341; the sequence is AIIYEVATVVYMIPMGLGMAV. Over 342–361 the chain is Cytoplasmic; it reads CVRVGTALGAADTLQAKRSA. Residues 362-382 traverse the membrane as a helical segment; the sequence is VSGLLCTAGTSLVVGTLLGLL. The Extracellular portion of the chain corresponds to 383–402; the sequence is NSQLGYIFTSDEEVIALVNQ. A helical membrane pass occupies residues 403–423; that stretch reads VLPIYIVFQLVEAVCCVFGGV. The Cytoplasmic segment spans residues 424–437; it reads LRGTGKQAFGAIVN. The helical transmembrane segment at 438–458 threads the bilayer; it reads AIMYYIVGLPLGIVLTFVVGM. Residue Arg-459 is a topological domain, extracellular. Residues 460 to 480 traverse the membrane as a helical segment; the sequence is IMGLWLGMLTCIFLAAVTFVV. Over 481–577 the chain is Cytoplasmic; the sequence is YAVQLDWKLA…LSVRQLLFRR (97 aa). The chain crosses the membrane as a helical span at residues 578 to 598; that stretch reads GAALAASVAVLMAGLLVRVLT. The Extracellular portion of the chain corresponds to 599-601; that stretch reads TGY.

The protein belongs to the multi antimicrobial extrusion (MATE) (TC 2.A.66.1) family. Expressed in renal cortical tissues.

The protein resides in the cell membrane. Its subcellular location is the apical cell membrane. It carries out the reaction thiamine(out) + H(+)(in) = thiamine(in) + H(+)(out). The enzyme catalyses estrone 3-sulfate(in) + H(+)(out) = estrone 3-sulfate(out) + H(+)(in). The catalysed reaction is creatinine(in) + H(+)(out) = creatinine(out) + H(+)(in). Its function is as follows. Multidrug efflux pump that functions as a H(+)/organic cation antiporter. Mediates the efflux of cationic compounds, such as the model cations, tetraethylammonium (TEA) and 1-methyl-4-phenylpyridinium (MPP+), the platinum-based drug oxaliplatin or weak bases that are positively charged at physiological pH, cimetidine or the antidiabetic drug metformin. Mediates the efflux of the endogenous compounds creatinine, thiamine and estrone-3-sulfate. Plays a physiological role in the excretion of drugs, toxins and endogenous metabolites through the kidney. In Oryctolagus cuniculus (Rabbit), this protein is Multidrug and toxin extrusion protein 2 (SLC47A2).